Here is a 288-residue protein sequence, read N- to C-terminus: Eukaryotic translation initiation factor 3 subunit G (288 aa).

Positions M1–G33 are disordered. A compositionally biased stretch (acidic residues) spans A11–N20. The span at E21–G33 shows a compositional bias: polar residues. Residues A208 to K286 form the RRM domain.

It belongs to the eIF-3 subunit G family. Component of the eukaryotic translation initiation factor 3 (eIF-3) complex.

Its subcellular location is the cytoplasm. RNA-binding component of the eukaryotic translation initiation factor 3 (eIF-3) complex, which is involved in protein synthesis of a specialized repertoire of mRNAs and, together with other initiation factors, stimulates binding of mRNA and methionyl-tRNAi to the 40S ribosome. The eIF-3 complex specifically targets and initiates translation of a subset of mRNAs involved in cell proliferation. This subunit can bind 18S rRNA. In Sclerotinia sclerotiorum (strain ATCC 18683 / 1980 / Ss-1) (White mold), this protein is Eukaryotic translation initiation factor 3 subunit G (tif35).